We begin with the raw amino-acid sequence, 764 residues long: Probable cyclic nucleotide-gated ion channel 20, chloroplastic (764 aa).

The transit peptide at 1-25 (MASHNENDDIPMLPISDPSSRTRAR) directs the protein to the chloroplast. The tract at residues 1-40 (MASHNENDDIPMLPISDPSSRTRARAFTSRSRSVSLSNPT) is disordered. Residues 19 to 33 (SSRTRARAFTSRSRS) show a composition bias toward low complexity. Residues 26-204 (AFTSRSRSVS…PHAKEVQTWT (179 aa)) lie on the Stromal side of the membrane. Residues 205–225 (KFFALSCLLAIFIDPLFFFLI) traverse the membrane as a helical segment. At 226 to 242 (KVQEQNKCIMIDWPMTK) the chain is on the lumenal side. The helical transmembrane segment at 243 to 263 (AFVAVRSVTDVIFTMNILLQF) threads the bilayer. Over 264–295 (RLAYVARESTVVGAGQLVSHPKKIALHYLKGK) the chain is Stromal. Residues 296–316 (FFLDLFIVMPLPQILILWIIP) traverse the membrane as a helical segment. Topologically, residues 317 to 329 (AHLGASGANYAKN) are lumenal. Residues 330–350 (LLRAAVLFQYIPKLYRLLPFL) traverse the membrane as a helical segment. The Stromal portion of the chain corresponds to 351 to 366 (AGQTPTGFIFESAWAN). The helical transmembrane segment at 367–387 (FVINLLTFMLAGHVVGSCWYL) threads the bilayer. Residues 388–488 (FGLQRVNQCL…GNQVPSYFLG (101 aa)) are Lumenal-facing. Residues 489 to 509 (EVFFTMGIIGLGLLLFALLIG) form a helical membrane-spanning segment. The Stromal segment spans residues 510 to 764 (NMQNFLQALG…LCTPQSSYSL (255 aa)). Residues 593 to 710 (IFSL…EDVT) and Glu658 contribute to the a nucleoside 3',5'-cyclic phosphate site. The calmodulin-binding stretch occupies residues 713–729 (FSRFLRSHRVQGAIRYD). One can recognise an IQ domain in the interval 734–763 (RLRAARQIQVAWRYRRRRLHRLCTPQSSYS).

The protein belongs to the cyclic nucleotide-gated cation channel (TC 1.A.1.5) family. In terms of assembly, homotetramer or heterotetramer.

Its subcellular location is the plastid. The protein localises to the chloroplast thylakoid membrane. Probable cyclic nucleotide-gated ion channel. In Arabidopsis thaliana (Mouse-ear cress), this protein is Probable cyclic nucleotide-gated ion channel 20, chloroplastic (CNGC20).